A 331-amino-acid chain; its full sequence is Glycerophosphodiester phosphodiesterase 1 (331 aa).

Residues 1–3 (MWL) lie on the Cytoplasmic side of the membrane. A helical transmembrane segment spans residues 4–24 (WEDQGGLLGPFSFVLVLLLVV). Residues 25-248 (TRSPFNACVL…PRYSVFWKQS (224 aa)) lie on the Lumenal side of the membrane. The 267-residue stretch at 65 to 331 (VSAIAHRGGS…SMLEDCAPHF (267 aa)) folds into the GP-PDE domain. The Mg(2+) site is built by E97 and D99. N-linked (GlcNAc...) asparagine glycosylation is present at N168. D174 is a binding site for Mg(2+). Residues 249 to 269 (VFVVLDILLDWSMHNVLWYLC) form a helical membrane-spanning segment. At 270 to 331 (GISAFLMQKD…SMLEDCAPHF (62 aa)) the chain is on the cytoplasmic side.

The protein belongs to the glycerophosphoryl diester phosphodiesterase family. In terms of assembly, interacts with PRAF2. Interacts with RGS16. The cofactor is Mg(2+). N-glycosylated. As to expression, detected in heart, brain, lung, liver, skeletal muscle, kidney, pituitary and testis.

The protein localises to the cell membrane. The protein resides in the cytoplasmic vesicle membrane. It catalyses the reaction sn-glycero-3-phospho-1D-myo-inositol + H2O = myo-inositol + sn-glycerol 3-phosphate + H(+). It carries out the reaction 1-O-(1Z-octadecenyl)-sn-glycero-3-phospho-(N-5Z,8Z,11Z,14Z-eicosatetraenoyl)-ethanolamine + H2O = 1-O-(1Z-octadecenyl)-sn-glycero-3-phosphate + N-(5Z,8Z,11Z,14Z-eicosatetraenoyl)-ethanolamine + H(+). The catalysed reaction is 1-O-(1Z-octadecenyl)-sn-glycero-3-phospho-(N-9Z-octadecenoyl)-ethanolamine + H2O = 1-O-(1Z-octadecenyl)-sn-glycero-3-phosphate + N-(9Z-octadecenoyl) ethanolamine + H(+). The enzyme catalyses 1-O-(1Z-octadecenyl)-sn-glycero-3-phospho-N-hexadecanoyl-ethanolamine + H2O = 1-O-(1Z-octadecenyl)-sn-glycero-3-phosphate + N-hexadecanoylethanolamine + H(+). It catalyses the reaction N-(4Z,7Z,10Z,13Z,16Z,19Z)-docosahexaenoyl-sn-glycero-3-phosphoethanolamine + H2O = N-(4Z,7Z,10Z,13Z,16Z,19Z)-docosahexaenoyl ethanolamine + sn-glycerol 3-phosphate + H(+). It carries out the reaction N-eicosanoyl-sn-glycero-3-phosphoethanolamine + H2O = N-eicosanoyl ethanolamine + sn-glycerol 3-phosphate + H(+). The catalysed reaction is N-hexadecanoyl-sn-glycero-3-phosphoethanolamine + H2O = N-hexadecanoylethanolamine + sn-glycerol 3-phosphate + H(+). The enzyme catalyses N-(9Z-octadecenoyl)-sn-glycero-3-phosphoethanolamine + H2O = N-(9Z-octadecenoyl) ethanolamine + sn-glycerol 3-phosphate + H(+). It catalyses the reaction N-(5Z,8Z,11Z,14Z-eicosatetraenoyl)-sn-glycero-3-phosphoethanolamine + H2O = N-(5Z,8Z,11Z,14Z-eicosatetraenoyl)-ethanolamine + sn-glycerol 3-phosphate + H(+). Inhibited by EDTA, calcium chloride, and zinc chloride. Enhanced by magnesium chloride. Glycerophosphodiester phosphodiesterase activity can be modulated by G-protein signaling pathways. In terms of biological role, hydrolyzes the phosphodiester bond of glycerophosphodiesters such as glycerophosphoinositol (GroPIns) and glycerophosphoethanolamine (GroPEth), to yield a glycerol phosphate and an alcohol. Hydrolyzes glycerophospho-N-acylethanolamines to N-acylethanolamines in the brain and participates in bioactive N-acylethanolamine biosynthesis such as anandamide (an endocannabinoid), N-palmitoylethanolamine (an anti-inflammatory), and N-oleoylethanolamine (an anorexic). In addition, has a lysophospholipase D activity by hydrolyzing N-acyl-lysoplasmenylethanolamine (N-acyl-lysoPlsEt) to N-acylethanolamine. However lysophospholipase D activity is lower than glycerophosphodiester phosphodiesterase activity. Has little or no activity towards glycerophosphocholine. The chain is Glycerophosphodiester phosphodiesterase 1 from Rattus norvegicus (Rat).